Reading from the N-terminus, the 352-residue chain is tRNA (guanine-N(1)-)-methyltransferase (352 aa).

S-adenosyl-L-methionine is bound by residues G109 and 129 to 134 (IGDYVL).

This sequence belongs to the RNA methyltransferase TrmD family. In terms of assembly, homodimer.

The protein localises to the cytoplasm. The catalysed reaction is guanosine(37) in tRNA + S-adenosyl-L-methionine = N(1)-methylguanosine(37) in tRNA + S-adenosyl-L-homocysteine + H(+). Its function is as follows. Specifically methylates guanosine-37 in various tRNAs. The chain is tRNA (guanine-N(1)-)-methyltransferase from Chlamydia trachomatis serovar L2 (strain ATCC VR-902B / DSM 19102 / 434/Bu).